The following is a 496-amino-acid chain: Squalene epoxidase ERG1 (496 aa).

Residues 4-24 (VKYDAIIIGAGVIGPTIATAF) form a helical membrane-spanning segment. Residues 15 to 16 (VI), 35 to 36 (ER), R43, R148, V164, D332, and M345 each bind FAD. The next 2 helical transmembrane spans lie at 431–451 (IGLL…FFSV) and 466–486 (LGFP…IVIF).

It belongs to the squalene monooxygenase family. It depends on FAD as a cofactor.

Its subcellular location is the microsome membrane. The protein resides in the endoplasmic reticulum membrane. The catalysed reaction is squalene + reduced [NADPH--hemoprotein reductase] + O2 = (S)-2,3-epoxysqualene + oxidized [NADPH--hemoprotein reductase] + H2O + H(+). The protein operates within terpene metabolism; lanosterol biosynthesis; lanosterol from farnesyl diphosphate: step 2/3. Activity is completely abolished by Triton X-100, deoxycholate or Cu(2+), and partially inhibited by thiol reagents, rotenone and antimycin A. The allylamine antimycotic agents naftifine and SF 86-327are potent inhibitors and show apparently non-competitive kinetics with respect to the substrate squalene. Functionally, squalene epoxidase; part of the third module of ergosterol biosynthesis pathway that includes the late steps of the pathway. Erg1 catalyzes the epoxidation of squalene into 2,3-epoxysqualene. The third module or late pathway involves the ergosterol synthesis itself through consecutive reactions that mainly occur in the endoplasmic reticulum (ER) membrane. Firstly, the squalene synthase ERG9 catalyzes the condensation of 2 farnesyl pyrophosphate moieties to form squalene, which is the precursor of all steroids. Squalene synthase is crucial for balancing the incorporation of farnesyl diphosphate (FPP) into sterol and nonsterol isoprene synthesis. Secondly, the squalene epoxidase ERG1 catalyzes the stereospecific oxidation of squalene to (S)-2,3-epoxysqualene, which is considered to be a rate-limiting enzyme in steroid biosynthesis. Then, the lanosterol synthase ERG7 catalyzes the cyclization of (S)-2,3 oxidosqualene to lanosterol, a reaction that forms the sterol core. In the next steps, lanosterol is transformed to zymosterol through a complex process involving various demethylation, reduction and desaturation reactions. The lanosterol 14-alpha-demethylase ERG11 (also known as CYP51) catalyzes C14-demethylation of lanosterol to produce 4,4'-dimethyl cholesta-8,14,24-triene-3-beta-ol, which is critical for ergosterol biosynthesis. The C-14 reductase ERG24 reduces the C14=C15 double bond of 4,4-dimethyl-cholesta-8,14,24-trienol to produce 4,4-dimethyl-cholesta-8,24-dienol. 4,4-dimethyl-cholesta-8,24-dienol is substrate of the C-4 demethylation complex ERG25-ERG26-ERG27 in which ERG25 catalyzes the three-step monooxygenation required for the demethylation of 4,4-dimethyl and 4alpha-methylsterols, ERG26 catalyzes the oxidative decarboxylation that results in a reduction of the 3-beta-hydroxy group at the C-3 carbon to an oxo group, and ERG27 is responsible for the reduction of the keto group on the C-3. ERG28 has a role as a scaffold to help anchor ERG25, ERG26 and ERG27 to the endoplasmic reticulum and ERG29 regulates the activity of the iron-containing C4-methylsterol oxidase ERG25. Then, the sterol 24-C-methyltransferase ERG6 catalyzes the methyl transfer from S-adenosyl-methionine to the C-24 of zymosterol to form fecosterol. The C-8 sterol isomerase ERG2 catalyzes the reaction which results in unsaturation at C-7 in the B ring of sterols and thus converts fecosterol to episterol. The sterol-C5-desaturase ERG3 then catalyzes the introduction of a C-5 double bond in the B ring to produce 5-dehydroepisterol. The C-22 sterol desaturase ERG5 further converts 5-dehydroepisterol into ergosta-5,7,22,24(28)-tetraen-3beta-ol by forming the C-22(23) double bond in the sterol side chain. Finally, ergosta-5,7,22,24(28)-tetraen-3beta-ol is substrate of the C-24(28) sterol reductase ERG4 to produce ergosterol. The protein is Squalene epoxidase ERG1 of Candida albicans (strain SC5314 / ATCC MYA-2876) (Yeast).